A 706-amino-acid polypeptide reads, in one-letter code: Glycine--tRNA ligase beta subunit (706 aa).

It belongs to the class-II aminoacyl-tRNA synthetase family. As to quaternary structure, tetramer of two alpha and two beta subunits.

Its subcellular location is the cytoplasm. The catalysed reaction is tRNA(Gly) + glycine + ATP = glycyl-tRNA(Gly) + AMP + diphosphate. This Acidobacterium capsulatum (strain ATCC 51196 / DSM 11244 / BCRC 80197 / JCM 7670 / NBRC 15755 / NCIMB 13165 / 161) protein is Glycine--tRNA ligase beta subunit.